A 166-amino-acid polypeptide reads, in one-letter code: MVLASSTTSIHTMLLLLLMLFHLGLQASISGRDTHRLTRTLNCSSIVKEIIGKLPEPELKTDDEGPSLRNKSFRRVNLSKFVESQGEVDPEDRYVIKSNLQKLNCCLPTSANDSALPGVFIRDLDDFRKKLRFYMVHLNDLETVLTSRPPQPASGSVSPNRGTVEC.

The signal sequence occupies residues 1–26 (MVLASSTTSIHTMLLLLLMLFHLGLQ). Asn-42 is a glycosylation site (N-linked (GlcNAc...) asparagine). 2 disulfides stabilise this stretch: Cys-43-Cys-106 and Cys-105-Cys-166. Asn-112 carries an N-linked (GlcNAc...) asparagine; partial glycan. The disordered stretch occupies residues 145–166 (LTSRPPQPASGSVSPNRGTVEC).

This sequence belongs to the IL-3 family. Monomer. As to expression, activated T-cells, mast cells, natural killer cells.

It localises to the secreted. Functionally, cytokine secreted predominantly by activated T-lymphocytes as well as mast cells and osteoblastic cells that controls the production and differentiation of hematopoietic progenitor cells into lineage-restricted cells. Also stimulates mature basophils, eosinophils, and monocytes to become functionally activated. In addition, plays an important role in neural cell proliferation and survival. Participates as well in bone homeostasis and inhibits osteoclast differentiation by preventing NF-kappa-B nuclear translocation and activation. Mechanistically, exerts its biological effects through a receptor composed of IL3RA subunit and a signal transducing subunit IL3RB. Receptor stimulation results in the rapid activation of JAK2 kinase activity leading to STAT5-mediated transcriptional program. Alternatively, contributes to cell survival under oxidative stress in non-hematopoietic systems by activating pathways mediated by PI3K/AKT and ERK. The sequence is that of Interleukin-3 (Il3) from Mus musculus (Mouse).